A 349-amino-acid polypeptide reads, in one-letter code: Protein-glutamate methylesterase/protein-glutamine glutaminase (349 aa).

Residues 5–122 (RVLSVDDSAL…REGMLAYSEM (118 aa)) form the Response regulatory domain. Aspartate 56 carries the 4-aspartylphosphate modification. The 193-residue stretch at 152–344 (LLSSEKLIAI…QQMLAKISAG (193 aa)) folds into the CheB-type methylesterase domain. Active-site residues include serine 164, histidine 190, and aspartate 286.

Belongs to the CheB family. Phosphorylated by CheA. Phosphorylation of the N-terminal regulatory domain activates the methylesterase activity.

The protein localises to the cytoplasm. The enzyme catalyses [protein]-L-glutamate 5-O-methyl ester + H2O = L-glutamyl-[protein] + methanol + H(+). It carries out the reaction L-glutaminyl-[protein] + H2O = L-glutamyl-[protein] + NH4(+). Involved in chemotaxis. Part of a chemotaxis signal transduction system that modulates chemotaxis in response to various stimuli. Catalyzes the demethylation of specific methylglutamate residues introduced into the chemoreceptors (methyl-accepting chemotaxis proteins or MCP) by CheR. Also mediates the irreversible deamidation of specific glutamine residues to glutamic acid. In Salmonella choleraesuis (strain SC-B67), this protein is Protein-glutamate methylesterase/protein-glutamine glutaminase.